The chain runs to 477 residues: Penton protein (477 aa).

It belongs to the adenoviridae penton family. Interacts with the fiber protein (via N-terminal tail region). Interacts with the capsid vertex protein; this interaction binds the penton base to neighboring peripentonal hexons.

Its subcellular location is the virion. It is found in the host nucleus. Functionally, major capsid protein that self-associates to form penton base pentamers, each in the shape of a pentagon, situated at the 12 vertices of the pseudo T=25 capsid. Involved in virus secondary attachment to host cell after initial attachment by the fiber protein, and in endocytosis of virions. As the virus enters the host cell, penton proteins are shed concomitant with virion acidification in the endosome. This chain is Penton protein, found in Canis lupus familiaris (Dog).